The following is a 710-amino-acid chain: Polyribonucleotide nucleotidyltransferase (710 aa).

The Mg(2+) site is built by Asp-489 and Asp-495. A KH domain is found at 556 to 615 (PKIDTIKIDVDKIKVVIGKGGETIDKIIAETGVKIDIDDEGNVSIYSSDQAAIDRTKEII). The S1 motif domain occupies 625 to 693 (GEVYHAKVIR…EKGRVDASMK (69 aa)). The segment at 691–710 (SMKALIPRPPKPEKKEEKHD) is disordered. Residues 700 to 710 (PKPEKKEEKHD) show a composition bias toward basic and acidic residues.

The protein belongs to the polyribonucleotide nucleotidyltransferase family. It depends on Mg(2+) as a cofactor.

It is found in the cytoplasm. It catalyses the reaction RNA(n+1) + phosphate = RNA(n) + a ribonucleoside 5'-diphosphate. In terms of biological role, involved in mRNA degradation. Catalyzes the phosphorolysis of single-stranded polyribonucleotides processively in the 3'- to 5'-direction. The sequence is that of Polyribonucleotide nucleotidyltransferase from Streptococcus pyogenes serotype M18 (strain MGAS8232).